Reading from the N-terminus, the 1325-residue chain is RIMS-binding protein 2 (1325 aa).

The interval 153-181 is disordered; the sequence is TFLSKSRSDTPRCRFDSDMDNDQNSNTSK. A compositionally biased stretch (basic and acidic residues) spans 158 to 169; that stretch reads SRSDTPRCRFDS. In terms of domain architecture, SH3 1 spans 186-253; it reads GKVHLCIARY…PSNFVDFVQD (68 aa). 3 consecutive Fibronectin type-III domains span residues 315 to 408, 411 to 493, and 507 to 608; these read VPYP…GKDV, APSN…KKEA, and PPQD…VPPS. Disordered stretches follow at residues 601–778, 988–1010, and 1040–1090; these read SDLL…GSDL, DLGSSFVEPRSEQVKSSYEKKYE, and AAGP…SRPM. Residues 627–641 show a composition bias toward basic and acidic residues; sequence ETKEEHLGPHLKIDE. Polar residues predominate over residues 664-676; sequence FPSSLQGRRSPSP. Positions 696 to 716 are enriched in basic and acidic residues; that stretch reads MAREAAQRVAESNRMERRSVF. Residues 717 to 727 show a composition bias toward polar residues; it reads SERSNAAQYAN. Basic and acidic residues-rich tracts occupy residues 763–774 and 996–1010; these read CHGEDYHTESSR and PRSEQVKSSYEKKYE. SH3 domains follow at residues 1121–1189 and 1225–1292; these read ISTR…EIQA and VSTR…EVPD.

The protein belongs to the RIMBP family. As to quaternary structure, interacts with RIMS1, RIMS2, CACNA1D and CACNA1B, and potentially with other Ca(2+) channel alpha-1 isoforms. As to expression, brain, cochlea and retina.

It localises to the cell membrane. It is found in the synapse. Plays a role in the synaptic transmission as bifunctional linker that interacts simultaneously with RIMS1, RIMS2, CACNA1D and CACNA1B. This Gallus gallus (Chicken) protein is RIMS-binding protein 2 (RIMBP2).